The chain runs to 91 residues: Protein RacC (91 aa).

This Escherichia coli (strain K12) protein is Protein RacC (racC).